A 332-amino-acid polypeptide reads, in one-letter code: Transcription factor HBP-1b(c38) (332 aa).

Positions 1 to 48 (MAEASPRTETSTDDTDENLMLEPGNAALAVVSDSSDRSRDKNGDQKTM) are disordered. A compositionally biased stretch (basic and acidic residues) spans 34 to 47 (SSDRSRDKNGDQKT). Residues 44–107 (DQKTMRRLAQ…SSADQSHSMS (64 aa)) form the bZIP domain. Residues 46–66 (KTMRRLAQNREAARKSRLRKK) are basic motif. Positions 47-142 (TMRRLAQNRE…RAAVNAHAGD (96 aa)) form a coiled coil. The segment at 72–86 (LENSRLKLTQLEQEL) is leucine-zipper. The 219-residue stretch at 111-329 (ALAFDTEYAR…RALSSLWLAR (219 aa)) folds into the DOG1 domain.

Belongs to the bZIP family. As to quaternary structure, binds DNA as a dimer.

The protein resides in the nucleus. Its function is as follows. Transcriptional activator that binds specifically to the DNA sequence 5'-TGACG-3'. Recognizes ocs elements like the as-1 motif of the cauliflower mosaic virus 35S promoter. Binding to the as-1-like cis elements mediate auxin- and salicylic acid-inducible transcription. Binds to the hexamer motif 5'-ACGTCA-3' of histone gene promoters. In Triticum aestivum (Wheat), this protein is Transcription factor HBP-1b(c38).